Here is a 451-residue protein sequence, read N- to C-terminus: Proline--tRNA ligase (451 aa).

Belongs to the class-II aminoacyl-tRNA synthetase family. ProS type 2 subfamily. Homodimer.

The protein localises to the cytoplasm. It catalyses the reaction tRNA(Pro) + L-proline + ATP = L-prolyl-tRNA(Pro) + AMP + diphosphate. Functionally, catalyzes the attachment of proline to tRNA(Pro) in a two-step reaction: proline is first activated by ATP to form Pro-AMP and then transferred to the acceptor end of tRNA(Pro). The protein is Proline--tRNA ligase of Roseobacter denitrificans (strain ATCC 33942 / OCh 114) (Erythrobacter sp. (strain OCh 114)).